Reading from the N-terminus, the 496-residue chain is Fascin (496 aa).

The protein belongs to the fascin family.

It localises to the cytoplasm. It is found in the cytoskeleton. Acts as an actin bundling protein. In Strongylocentrotus purpuratus (Purple sea urchin), this protein is Fascin.